A 184-amino-acid polypeptide reads, in one-letter code: Glutathione-regulated potassium-efflux system ancillary protein KefG (184 aa).

Belongs to the NAD(P)H dehydrogenase (quinone) family. KefG subfamily. Interacts with KefB.

It localises to the cell inner membrane. The catalysed reaction is a quinone + NADH + H(+) = a quinol + NAD(+). The enzyme catalyses a quinone + NADPH + H(+) = a quinol + NADP(+). In terms of biological role, regulatory subunit of a potassium efflux system that confers protection against electrophiles. Required for full activity of KefB. The sequence is that of Glutathione-regulated potassium-efflux system ancillary protein KefG from Erwinia tasmaniensis (strain DSM 17950 / CFBP 7177 / CIP 109463 / NCPPB 4357 / Et1/99).